A 59-amino-acid polypeptide reads, in one-letter code: UPF0391 membrane protein lpl2443 (59 aa).

Transmembrane regions (helical) follow at residues A5–V25 and I30–L50.

This sequence belongs to the UPF0391 family.

The protein resides in the cell membrane. This Legionella pneumophila (strain Lens) protein is UPF0391 membrane protein lpl2443.